Here is a 492-residue protein sequence, read N- to C-terminus: Argininosuccinate lyase (492 aa).

This sequence belongs to the lyase 1 family. Argininosuccinate lyase subfamily.

Its subcellular location is the cytoplasm. The enzyme catalyses 2-(N(omega)-L-arginino)succinate = fumarate + L-arginine. Its pathway is amino-acid biosynthesis; L-arginine biosynthesis; L-arginine from L-ornithine and carbamoyl phosphate: step 3/3. This Methanoculleus marisnigri (strain ATCC 35101 / DSM 1498 / JR1) protein is Argininosuccinate lyase.